The chain runs to 471 residues: tRNA-2-methylthio-N(6)-dimethylallyladenosine synthase (471 aa).

The MTTase N-terminal domain maps to Lys36–Thr154. 6 residues coordinate [4Fe-4S] cluster: Cys45, Cys81, Cys115, Cys191, Cys195, and Cys198. Positions Arg177–Lys407 constitute a Radical SAM core domain. A TRAM domain is found at Gln410 to Ile471.

The protein belongs to the methylthiotransferase family. MiaB subfamily. In terms of assembly, monomer. [4Fe-4S] cluster is required as a cofactor.

It localises to the cytoplasm. The enzyme catalyses N(6)-dimethylallyladenosine(37) in tRNA + (sulfur carrier)-SH + AH2 + 2 S-adenosyl-L-methionine = 2-methylsulfanyl-N(6)-dimethylallyladenosine(37) in tRNA + (sulfur carrier)-H + 5'-deoxyadenosine + L-methionine + A + S-adenosyl-L-homocysteine + 2 H(+). Functionally, catalyzes the methylthiolation of N6-(dimethylallyl)adenosine (i(6)A), leading to the formation of 2-methylthio-N6-(dimethylallyl)adenosine (ms(2)i(6)A) at position 37 in tRNAs that read codons beginning with uridine. The protein is tRNA-2-methylthio-N(6)-dimethylallyladenosine synthase of Caldicellulosiruptor saccharolyticus (strain ATCC 43494 / DSM 8903 / Tp8T 6331).